A 209-amino-acid polypeptide reads, in one-letter code: Ribosomal RNA large subunit methyltransferase E (209 aa).

5 residues coordinate S-adenosyl-L-methionine: G63, W65, D83, D99, and D124. The Proton acceptor role is filled by K164.

It belongs to the class I-like SAM-binding methyltransferase superfamily. RNA methyltransferase RlmE family.

The protein resides in the cytoplasm. The enzyme catalyses uridine(2552) in 23S rRNA + S-adenosyl-L-methionine = 2'-O-methyluridine(2552) in 23S rRNA + S-adenosyl-L-homocysteine + H(+). In terms of biological role, specifically methylates the uridine in position 2552 of 23S rRNA at the 2'-O position of the ribose in the fully assembled 50S ribosomal subunit. The chain is Ribosomal RNA large subunit methyltransferase E from Shigella dysenteriae serotype 1 (strain Sd197).